The following is a 60-amino-acid chain: Large ribosomal subunit protein bL32 (60 aa).

It belongs to the bacterial ribosomal protein bL32 family.

In Desulfovibrio desulfuricans (strain ATCC 27774 / DSM 6949 / MB), this protein is Large ribosomal subunit protein bL32.